Consider the following 120-residue polypeptide: Aspartate 1-decarboxylase (120 aa).

The active-site Schiff-base intermediate with substrate; via pyruvic acid is S25. At S25 the chain carries Pyruvic acid (Ser). A substrate-binding site is contributed by T57. The active-site Proton donor is the Y58. Position 73 to 75 (73 to 75 (GAA)) interacts with substrate.

This sequence belongs to the PanD family. In terms of assembly, heterooctamer of four alpha and four beta subunits. Requires pyruvate as cofactor. Is synthesized initially as an inactive proenzyme, which is activated by self-cleavage at a specific serine bond to produce a beta-subunit with a hydroxyl group at its C-terminus and an alpha-subunit with a pyruvoyl group at its N-terminus.

Its subcellular location is the cytoplasm. It carries out the reaction L-aspartate + H(+) = beta-alanine + CO2. The protein operates within cofactor biosynthesis; (R)-pantothenate biosynthesis; beta-alanine from L-aspartate: step 1/1. In terms of biological role, catalyzes the pyruvoyl-dependent decarboxylation of aspartate to produce beta-alanine. In Ralstonia pickettii (strain 12J), this protein is Aspartate 1-decarboxylase.